The sequence spans 267 residues: Methylglyoxal reductase DkgB (267 aa).

The Proton donor role is filled by tyrosine 39. Residue histidine 97 participates in substrate binding. 179 to 231 (MTLAYGKALKDEVIARIAAKHNATPAQVILAWAMGEGYSVIPSSTRRENLASS) is an NADP(+) binding site.

The protein belongs to the aldo/keto reductase family. As to quaternary structure, monomer.

The protein localises to the cytoplasm. The enzyme catalyses hydroxyacetone + NADP(+) = methylglyoxal + NADPH + H(+). In terms of biological role, aldo-keto reductase that significantly contributes to cellular methylglyoxal detoxification by catalyzing the NADPH-dependent conversion of methylglyoxal to acetol. The polypeptide is Methylglyoxal reductase DkgB (Salmonella typhimurium (strain LT2 / SGSC1412 / ATCC 700720)).